Consider the following 360-residue polypeptide: UDP-N-acetylglucosamine--N-acetylmuramyl-(pentapeptide) pyrophosphoryl-undecaprenol N-acetylglucosamine transferase (360 aa).

UDP-N-acetyl-alpha-D-glucosamine-binding residues include serine 198 and glutamine 289.

It belongs to the glycosyltransferase 28 family. MurG subfamily.

Its subcellular location is the cell membrane. The enzyme catalyses Mur2Ac(oyl-L-Ala-gamma-D-Glu-L-Lys-D-Ala-D-Ala)-di-trans,octa-cis-undecaprenyl diphosphate + UDP-N-acetyl-alpha-D-glucosamine = beta-D-GlcNAc-(1-&gt;4)-Mur2Ac(oyl-L-Ala-gamma-D-Glu-L-Lys-D-Ala-D-Ala)-di-trans,octa-cis-undecaprenyl diphosphate + UDP + H(+). It participates in cell wall biogenesis; peptidoglycan biosynthesis. Its function is as follows. Cell wall formation. Catalyzes the transfer of a GlcNAc subunit on undecaprenyl-pyrophosphoryl-MurNAc-pentapeptide (lipid intermediate I) to form undecaprenyl-pyrophosphoryl-MurNAc-(pentapeptide)GlcNAc (lipid intermediate II). The polypeptide is UDP-N-acetylglucosamine--N-acetylmuramyl-(pentapeptide) pyrophosphoryl-undecaprenol N-acetylglucosamine transferase (Streptococcus pyogenes serotype M4 (strain MGAS10750)).